The primary structure comprises 1380 residues: Protein TORNADO 1 (1380 aa).

10 LRR repeats span residues 26–46, 47–70, 105–132, 161–184, 266–289, 299–322, 323–346, 348–371, 446–472, and 476–502; these read FFNL…CQLI, TESS…FIEL, TSKI…ILKR, NDSL…ELSR, NTTV…EFRW, EVKL…LFKN, KSLQ…LLCP, SRFS…GSNT, INPL…IYQK, and NGRK…SVRA. One can recognise a Roc domain in the interval 493–702; the sequence is PLTEPKSVRA…HHIRMTSKAI (210 aa). GTP is bound by residues 506–513 and 567–571; these read GQNYAGKT and NLAGQ. A helical membrane pass occupies residues 574–594; it reads FFALHDLMFPSPCFFLIVLSL. LRR repeat units follow at residues 640 to 665, 688 to 712, 799 to 826, 1023 to 1046, 1131 to 1154, and 1229 to 1254; these read LTHS…RLRD, VSKL…VYQL, LTQL…ELEK, QSQF…TMYD, EAVL…IQGL, and QLGC…NFMK. 641-644 serves as a coordination point for GTP; sequence THSE. The 175-residue stretch at 757-931 folds into the COR domain; that stretch reads NIQIVETRRH…LQVHLHNRIM (175 aa). A run of 2 helical transmembrane segments spans residues 1255–1275 and 1287–1307; these read LVTF…HMIP and PAVM…AALG.

Expressed in seedlings, roots, leaves, stems and flowers. Present in ovules, prominently in nucellus and integuments.

It localises to the membrane. Its function is as follows. Involved in the basipetal transport of auxin (IAA) that modulates growth and organs organization. Required for initial divisions in the epidermal/lateral root cap leading to the formation of epidermal cells and a clone of lateral root cap cells, as well as for the maintenance of the radial pattern of cell specification in the root, thus regulating the distinction between the lateral root cap and epidermis. This Arabidopsis thaliana (Mouse-ear cress) protein is Protein TORNADO 1 (TRN1).